The chain runs to 78 residues: Large ribosomal subunit protein bL28 (78 aa).

A disordered region spans residues 1 to 33; that stretch reads MARKDDVTGEGPVTGNSVSDSNQKTNRRFKRNL. A compositionally biased stretch (polar residues) spans 14–24; sequence TGNSVSDSNQK.

The protein belongs to the bacterial ribosomal protein bL28 family.

This Salinibacter ruber (strain DSM 13855 / M31) protein is Large ribosomal subunit protein bL28.